The following is a 212-amino-acid chain: MKIIEVDEELYQFIASHTQSIGESASDILRRLLNLPTSSVSSVALETVAVESAEAANPETPSAVKNDFVLEPVAEKSSLEKTVKKQPEQVICHIVNKVRQVIESEAFQHETKAVVRFLAILTALYRTNPEGFSLAIESEQVQGRTRVYFARDEATLLAAGTHTKPKQIPDTPYWVITNNNSGRKMIMLEGVMHGMQLPDELIEDIRGYFIVN.

Interaction with DNA regions lie at residues 113 to 114 (AV) and 144 to 148 (RTRVY).

Belongs to the SeqA family. Homodimer. Polymerizes to form helical filaments.

It is found in the cytoplasm. Functionally, negative regulator of replication initiation, which contributes to regulation of DNA replication and ensures that replication initiation occurs exactly once per chromosome per cell cycle. Binds to pairs of hemimethylated GATC sequences in the oriC region, thus preventing assembly of replication proteins and re-initiation at newly replicated origins. Repression is relieved when the region becomes fully methylated. This Actinobacillus succinogenes (strain ATCC 55618 / DSM 22257 / CCUG 43843 / 130Z) protein is Negative modulator of initiation of replication.